The primary structure comprises 211 residues: Small ribosomal subunit protein uS3 (211 aa).

The KH type-2 domain maps to 38-106 (LRKFIKKAFY…NIELNIIEVK (69 aa)).

It belongs to the universal ribosomal protein uS3 family. As to quaternary structure, part of the 30S ribosomal subunit. Forms a tight complex with proteins S10 and S14.

Binds the lower part of the 30S subunit head. Binds mRNA in the 70S ribosome, positioning it for translation. This chain is Small ribosomal subunit protein uS3, found in Ehrlichia ruminantium (strain Welgevonden).